A 58-amino-acid polypeptide reads, in one-letter code: Succinate dehydrogenase subunit 8A, mitochondrial (58 aa).

In terms of assembly, component of complex II composed of eight subunits in plants: four classical SDH subunits SDH1, SDH2, SDH3 and SDH4 (a flavoprotein (FP), an iron-sulfur protein (IP), and a cytochrome b composed of a large and a small subunit.), as well as four subunits unknown in mitochondria from bacteria and heterotrophic eukaryotes.

It localises to the mitochondrion inner membrane. It functions in the pathway carbohydrate metabolism; tricarboxylic acid cycle. The sequence is that of Succinate dehydrogenase subunit 8A, mitochondrial from Oryza sativa subsp. japonica (Rice).